We begin with the raw amino-acid sequence, 265 residues long: Putative hydro-lyase PST_2764 (265 aa).

Belongs to the D-glutamate cyclase family.

This Stutzerimonas stutzeri (strain A1501) (Pseudomonas stutzeri) protein is Putative hydro-lyase PST_2764.